Here is a 476-residue protein sequence, read N- to C-terminus: Lactate utilization protein B 1 (476 aa).

4Fe-4S ferredoxin-type domains follow at residues 301–331 and 350–379; these read GTEF…GHAY and YDEY…LHDL. Positions 310, 313, 316, 320, 363, 366, and 370 each coordinate [4Fe-4S] cluster.

This sequence belongs to the LutB/YkgF family.

Is involved in L-lactate degradation and allows cells to grow with lactate as the sole carbon source. Has probably a role as an electron transporter during oxidation of L-lactate. This is Lactate utilization protein B 1 from Bacillus mycoides (strain KBAB4) (Bacillus weihenstephanensis).